We begin with the raw amino-acid sequence, 144 residues long: Small ribosomal subunit protein eS19B (144 aa).

Belongs to the eukaryotic ribosomal protein eS19 family. As to quaternary structure, component of the small ribosomal subunit (SSU). Mature yeast ribosomes consist of a small (40S) and a large (60S) subunit. The 40S small subunit contains 1 molecule of ribosomal RNA (18S rRNA) and 33 different proteins (encoded by 57 genes). The large 60S subunit contains 3 rRNA molecules (25S, 5.8S and 5S rRNA) and 46 different proteins (encoded by 81 genes).

It localises to the cytoplasm. In terms of biological role, component of the ribosome, a large ribonucleoprotein complex responsible for the synthesis of proteins in the cell. The small ribosomal subunit (SSU) binds messenger RNAs (mRNAs) and translates the encoded message by selecting cognate aminoacyl-transfer RNA (tRNA) molecules. The large subunit (LSU) contains the ribosomal catalytic site termed the peptidyl transferase center (PTC), which catalyzes the formation of peptide bonds, thereby polymerizing the amino acids delivered by tRNAs into a polypeptide chain. The nascent polypeptides leave the ribosome through a tunnel in the LSU and interact with protein factors that function in enzymatic processing, targeting, and the membrane insertion of nascent chains at the exit of the ribosomal tunnel. eS19 is required for proper maturation of the small (40S) ribosomal subunit. Binds to 40S pre-ribosomal particles, probably required after association of NOC4 but before association of ENP1, TSR1 and RIO2 with 20/21S pre-rRNA. Functionally, required for proper maturation of the small (40S) ribosomal subunit. Binds to 40s pre-ribosomal particles, probably required after association of NOC4 but before association of ENP1, TSR1 and RIO2 with 20/21S pre-rRNA. The sequence is that of Small ribosomal subunit protein eS19B from Saccharomyces cerevisiae (strain ATCC 204508 / S288c) (Baker's yeast).